Here is a 273-residue protein sequence, read N- to C-terminus: Replication factor A protein 2 (273 aa).

Residues 1–13 (MATYQPYNEYSSV) are compositionally biased toward polar residues. A disordered region spans residues 1–38 (MATYQPYNEYSSVTGGGFENSESRPGSGESETNTRVNT). The residue at position 27 (serine 27) is a Phosphoserine. The segment covering 29-38 (ESETNTRVNT) has biased composition (polar residues). Residues 69–157 (VCFVGVVRNI…NIQYAVIKPI (89 aa)) constitute a DNA-binding region (OB). A Phosphoserine modification is found at serine 122.

This sequence belongs to the replication factor A protein 2 family. In terms of assembly, heterotrimer of 69, 36, and 13 kDa chains. The DNA-binding activity may reside exclusively on the 69 kDa subunit. Interacts with MCM10. Phosphorylated in a cell cycle-dependent manner with phosphorylation increasing at the entry in S phase and dephosphorylation occurring at mitosis. Post-translationally, the N-terminus is blocked.

It localises to the nucleus. Its function is as follows. Binds to single-stranded sequences participating in DNA replication in addition to those mediating transcriptional repression (URS1) and activation (CAR1). Stimulates the activity of a cognate strand exchange protein (SEP1). It cooperates with T-AG and DNA topoisomerase I to unwind template DNA containing the simian virus 40 origin of DNA replication. This chain is Replication factor A protein 2 (RFA2), found in Saccharomyces cerevisiae (strain ATCC 204508 / S288c) (Baker's yeast).